The sequence spans 341 residues: Adenylosuccinate synthetase (341 aa).

GTP is bound by residues 12–18 (GDEGKGK) and 42–44 (GHS). Catalysis depends on aspartate 13, which acts as the Proton acceptor. Aspartate 13 and glycine 42 together coordinate Mg(2+). Residues 13 to 16 (DEGK), 40 to 43 (NAGH), threonine 127, arginine 141, glutamine 179, threonine 194, and arginine 256 contribute to the IMP site. The active-site Proton donor is histidine 43. 252–258 (VVTGRKR) serves as a coordination point for substrate. GTP-binding positions include arginine 258, 284-286 (CID), and 324-326 (STG).

The protein belongs to the adenylosuccinate synthetase family. Homodimer. The cofactor is Mg(2+).

It is found in the cytoplasm. The catalysed reaction is IMP + L-aspartate + GTP = N(6)-(1,2-dicarboxyethyl)-AMP + GDP + phosphate + 2 H(+). It participates in purine metabolism; AMP biosynthesis via de novo pathway; AMP from IMP: step 1/2. Functionally, plays an important role in the de novo pathway of purine nucleotide biosynthesis. Catalyzes the first committed step in the biosynthesis of AMP from IMP. This is Adenylosuccinate synthetase from Methanosphaera stadtmanae (strain ATCC 43021 / DSM 3091 / JCM 11832 / MCB-3).